The sequence spans 422 residues: UDP-N-acetylglucosamine 1-carboxyvinyltransferase (422 aa).

A phosphoenolpyruvate-binding site is contributed by 22 to 23; that stretch reads KN. Residue R93 participates in UDP-N-acetyl-alpha-D-glucosamine binding. C117 functions as the Proton donor in the catalytic mechanism. 2-(S-cysteinyl)pyruvic acid O-phosphothioketal is present on C117. UDP-N-acetyl-alpha-D-glucosamine is bound by residues 122 to 126, D305, and I327; that span reads RPVDQ.

It belongs to the EPSP synthase family. MurA subfamily.

It localises to the cytoplasm. The catalysed reaction is phosphoenolpyruvate + UDP-N-acetyl-alpha-D-glucosamine = UDP-N-acetyl-3-O-(1-carboxyvinyl)-alpha-D-glucosamine + phosphate. The protein operates within cell wall biogenesis; peptidoglycan biosynthesis. In terms of biological role, cell wall formation. Adds enolpyruvyl to UDP-N-acetylglucosamine. The chain is UDP-N-acetylglucosamine 1-carboxyvinyltransferase from Bordetella parapertussis (strain 12822 / ATCC BAA-587 / NCTC 13253).